Here is a 282-residue protein sequence, read N- to C-terminus: tRNA uridine(34) hydroxylase (282 aa).

A Rhodanese domain is found at 128–222; sequence DGREVVMLDT…YFEEVGADHY (95 aa). The active-site Cysteine persulfide intermediate is the C182.

Belongs to the TrhO family.

The enzyme catalyses uridine(34) in tRNA + AH2 + O2 = 5-hydroxyuridine(34) in tRNA + A + H2O. Catalyzes oxygen-dependent 5-hydroxyuridine (ho5U) modification at position 34 in tRNAs. This chain is tRNA uridine(34) hydroxylase, found in Ralstonia nicotianae (strain ATCC BAA-1114 / GMI1000) (Ralstonia solanacearum).